Consider the following 93-residue polypeptide: Alpha-defensin 6/12 (93 aa).

An N-terminal signal peptide occupies residues 1–19; sequence MKTLILLSALVLLAFQVQA. The propeptide occupies 20–60; it reads DPIQNTDEETKTEEQPGEEDQAVSVSFGDPEGTSLQEESLR. Residues 23–54 are disordered; it reads QNTDEETKTEEQPGEEDQAVSVSFGDPEGTSL. Cystine bridges form between Cys-64/Cys-92, Cys-66/Cys-81, and Cys-71/Cys-91.

This sequence belongs to the alpha-defensin family. In terms of tissue distribution, paneth cells of the small bowel.

Its subcellular location is the secreted. Its function is as follows. Has broad-spectrum antimicrobial properties. Has antibacterial activity against the Gram-positive bacterium L.monocytogenes EGD and the Gram-negative bacteria E.coli ML-35p and avirulent S.typhimurium 7953, but not against the mouse-virulent S.typhimurium 14028S. Probably contributes to the antimicrobial barrier function of the small bowel mucosa. This is Alpha-defensin 6/12 (Defa6) from Mus musculus (Mouse).